The chain runs to 2948 residues: Transforming acidic coiled-coil-containing protein 2 (2948 aa).

Positions 1–30 (MGNENSTSDNQRTLSAQTPRSAQPPGNSQN) are enriched in polar residues. 15 disordered regions span residues 1 to 304 (MGNE…TDDL), 314 to 333 (RSNS…QESC), 392 to 453 (AAGG…MPVS), 465 to 785 (LVGL…PQGE), 825 to 964 (SSEK…VSPP), 985 to 1050 (CTGQ…QPDS), 1062 to 1154 (ALAP…GEAT), 1243 to 1274 (AAQR…VGEP), 1296 to 1400 (QPGA…EQIA), 1427 to 1463 (PGEK…VTLL), 1493 to 1661 (ASDK…GERR), 1675 to 1705 (LGNQ…AGEA), 1741 to 1878 (VLPG…ESPT), 1907 to 2035 (HAGL…SSGT), and 2052 to 2460 (LEPR…ETPP). A compositionally biased stretch (basic and acidic residues) spans 174–184 (GRERQPKEEGQ). 3 positions are modified to phosphoserine: Ser197, Ser201, and Ser269. Val325 bears the Phosphothreonine mark. At Ser493 the chain carries Phosphoserine. A compositionally biased stretch (basic and acidic residues) spans 496–507 (ERGEHLNTEQSH). Phosphoserine occurs at positions 561, 571, and 575. Positions 604-629 (SKRDPEVGKDELSKPSSDAESRDHPS) are enriched in basic and acidic residues. Ser758 carries the post-translational modification Phosphoserine. Residues 911–926 (SDTPTSSPTDMVWESS) show a composition bias toward low complexity. Phosphoserine is present on Ser962. Over residues 985 to 996 (CTGQGPNKSQQA) the composition is skewed to polar residues. Ser1025 bears the Phosphoserine mark. Residues Ser1267 and Ser1313 each carry the phosphoserine modification. Residues 1348 to 1357 (ATAPGAGAKA) show a composition bias toward low complexity. Positions 1383 to 1400 (DPKQGTSGGVDTSSEQIA) are enriched in polar residues. Phosphoserine is present on Ser1562. Composition is skewed to basic and acidic residues over residues 1801–1823 (DETH…RESP) and 1834–1854 (PKKD…RGAE). A compositionally biased stretch (low complexity) spans 1862–1873 (ADDIIQPAAPAD). Residues 1939–1948 (PAKDLSRSSD) are compositionally biased toward basic and acidic residues. Pro residues predominate over residues 1963 to 1976 (KAPPAPPPPPPEVI). At Ser2072 the chain carries Phosphoserine. Positions 2074–2102 (DSVPISKSTLSRSLSLQASDFDGASSSGN) are enriched in polar residues. Over residues 2114–2124 (STGSSSASSTL) the composition is skewed to low complexity. A compositionally biased stretch (basic residues) spans 2125 to 2141 (KRTKKPRPPSLKKKQTT). A phosphoserine mark is found at Ser2161 and Ser2226. Thr2246 carries the post-translational modification Phosphothreonine. Ser2256 carries the post-translational modification Phosphoserine. Positions 2265-2275 (LEFDYSEDKSS) are enriched in basic and acidic residues. Basic residues predominate over residues 2288–2305 (KIGKKPVAKMPLRRPKMK). Residues 2315–2403 (PASPPRSPAE…SPASFEIPAS (89 aa)) enclose the SPAZ domain. Ser2317, Ser2321, Ser2359, Ser2389, Ser2392, Ser2394, and Ser2403 each carry phosphoserine. A compositionally biased stretch (polar residues) spans 2348–2368 (NPFSSTSKMQESPKLPQQSYN). The segment covering 2382–2395 (KTSSKTPSSPSKSP) has biased composition (low complexity). Thr2430, Thr2451, Thr2455, and Thr2458 each carry phosphothreonine. 2 positions are modified to phosphoserine: Ser2512 and Ser2534. Thr2553 is subject to Phosphothreonine. Positions 2555 to 2577 (QESPVKSSPVRMSESPTPCSGSS) are disordered. 2 positions are modified to phosphoserine: Ser2557 and Ser2569. Positions 2568 to 2577 (ESPTPCSGSS) are enriched in polar residues. A Phosphothreonine modification is found at Thr2625. 2 coiled-coil regions span residues 2675-2703 (AQKL…LASR) and 2746-2947 (DLDS…KMGK).

Belongs to the TACC family. As to quaternary structure, interacts with CCDC100/CEP120. Interacts with microtubules. Interacts with YEATS4, GCN5L2 and PCAF. Post-translationally, phosphorylated by TTK; which is required for localization in centrosome. As to expression, strongly expressed in heart, skeletal muscle, brain, prostate, thyroid and trachea.

It is found in the cytoplasm. Its subcellular location is the nucleus. The protein localises to the cytoskeleton. The protein resides in the microtubule organizing center. It localises to the centrosome. Plays a role in the microtubule-dependent coupling of the nucleus and the centrosome. Involved in the processes that regulate centrosome-mediated interkinetic nuclear migration (INM) of neural progenitors. May play a role in organizing centrosomal microtubules. May act as a tumor suppressor protein. May represent a tumor progression marker. This chain is Transforming acidic coiled-coil-containing protein 2 (TACC2), found in Homo sapiens (Human).